We begin with the raw amino-acid sequence, 493 residues long: Maintenance of mitochondrial morphology protein 1 (493 aa).

Over 1 to 23 (MSQHSQYGVPGVPAQSSLSFTQG) the chain is Lumenal. The helical transmembrane segment at 24–44 (FLLGQLSVVLLIGAFIKFFIF) threads the bilayer. Over 45 to 493 (GEAPAPPSRG…GSMPRVVRTP (449 aa)) the chain is Cytoplasmic. The interval 52-104 (SRGLASRTASHHRSYSINQGDNNANNNTNNGSSPRTLREKPSTSNVLRPVPSS) is disordered. A compositionally biased stretch (low complexity) spans 69–81 (NQGDNNANNNTNN). The span at 93–104 (STSNVLRPVPSS) shows a compositional bias: polar residues. An SMP-LTD domain is found at 140–391 (QPESLDWFNV…EPRVQVVGLP (252 aa)). Residues 420 to 493 (SSRSGGGPVE…GSMPRVVRTP (74 aa)) form a disordered region.

The protein belongs to the MMM1 family. As to quaternary structure, homodimer. Component of the ER-mitochondria encounter structure (ERMES) or MDM complex, composed of mmm1, mdm10, mdm12 and mdm34. A mmm1 homodimer associates with one molecule of mdm12 on each side in a pairwise head-to-tail manner, and the SMP-LTD domains of mmm1 and mdm12 generate a continuous hydrophobic tunnel for phospholipid trafficking.

Its subcellular location is the endoplasmic reticulum membrane. In terms of biological role, component of the ERMES/MDM complex, which serves as a molecular tether to connect the endoplasmic reticulum (ER) and mitochondria. Components of this complex are involved in the control of mitochondrial shape and protein biogenesis, and function in nonvesicular lipid trafficking between the ER and mitochondria. The mdm12-mmm1 subcomplex functions in the major beta-barrel assembly pathway that is responsible for biogenesis of all outer membrane beta-barrel proteins, and acts in a late step after the SAM complex. The mdm10-mdm12-mmm1 subcomplex further acts in the TOM40-specific pathway after the action of the mdm12-mmm1 complex. Essential for establishing and maintaining the structure of mitochondria and maintenance of mtDNA nucleoids. The sequence is that of Maintenance of mitochondrial morphology protein 1 from Talaromyces stipitatus (strain ATCC 10500 / CBS 375.48 / QM 6759 / NRRL 1006) (Penicillium stipitatum).